A 202-amino-acid polypeptide reads, in one-letter code: uncharacterized protein (202 aa).

At 1-6 (MITDFL) the chain is on the cytoplasmic side. The helical; Signal-anchor for type II membrane protein transmembrane segment at 7–23 (LAFSILAVSTTLGVSNL) threads the bilayer. At 24–202 (NKQCRDLLQC…KNGKTRGHSG (179 aa)) the chain is on the extracellular side. Asn53 carries an N-linked (GlcNAc...) asparagine glycan.

Its subcellular location is the membrane. This is an uncharacterized protein from Caenorhabditis elegans.